A 492-amino-acid chain; its full sequence is MTRLTDLGVTDLRDGIAKGDFSAKEVAESFLTATNEAEKLNAFITLTPDHALKQAEKADKDRASGQLKPLSGVPLGIKDLFCTNGYRTTAASKIIDNFVPPYESTITEKLFSAGAGMVGKLNLDQFAMGSSNETSAFGNVISPWRQKGDDTALTPGGSSGGSAAAVAAKLVPAATGTDTGGSIRQPASFTGITGLKPTYGRCSRYGVIAFASSLDQAGPMAHSVKDCAALLEVMAGFDPKDSTSVDVMVPNWEKLLSSDIRGKKIGIPKEYRVDGMAPEIESLWQRGIDMMKDAGAEIIDVSLPHTQHALAAYYIIAPAEASSNLARYDGVRYGERKTPEGGNLADMYAATRAAGFGDEVKRRIMIGTYVLSAGFYDAYYIKAQKIRALIARDFEAAFDKCDILLTPATPTAAFALGQKQEDPIAMYLNDVFTVPASLAGLPAMTVPVGLNEQGLPLGLQLIGKPLDEQSVLNAGLALEERAGFTSQPKKWW.

Catalysis depends on charge relay system residues K78 and S158. Residue S182 is the Acyl-ester intermediate of the active site.

The protein belongs to the amidase family. GatA subfamily. Heterotrimer of A, B and C subunits.

The enzyme catalyses L-glutamyl-tRNA(Gln) + L-glutamine + ATP + H2O = L-glutaminyl-tRNA(Gln) + L-glutamate + ADP + phosphate + H(+). Functionally, allows the formation of correctly charged Gln-tRNA(Gln) through the transamidation of misacylated Glu-tRNA(Gln) in organisms which lack glutaminyl-tRNA synthetase. The reaction takes place in the presence of glutamine and ATP through an activated gamma-phospho-Glu-tRNA(Gln). In Zymomonas mobilis subsp. mobilis (strain ATCC 31821 / ZM4 / CP4), this protein is Glutamyl-tRNA(Gln) amidotransferase subunit A.